Consider the following 193-residue polypeptide: Thymidylate kinase (193 aa).

Glycine 7–serine 14 contributes to the ATP binding site.

It belongs to the thymidylate kinase family.

The catalysed reaction is dTMP + ATP = dTDP + ADP. In terms of biological role, phosphorylation of dTMP to form dTDP in both de novo and salvage pathways of dTTP synthesis. In Coprothermobacter proteolyticus (strain ATCC 35245 / DSM 5265 / OCM 4 / BT), this protein is Thymidylate kinase.